A 125-amino-acid polypeptide reads, in one-letter code: Small ribosomal subunit protein eS8 (125 aa).

This sequence belongs to the eukaryotic ribosomal protein eS8 family. Part of the 30S ribosomal subunit.

The protein is Small ribosomal subunit protein eS8 of Methanocella arvoryzae (strain DSM 22066 / NBRC 105507 / MRE50).